Consider the following 381-residue polypeptide: MRVLHFYKTYLSETVGGIEQVIFQLCESSGSWGIDNHVLTLSSDPHPPVVPFGGHVVHRARLDLQLASTGFSLSVFKQFRELAAEADVVNYHFPWPFMDLVHFLTGMNKPSVVTYHSDIIRQRVLLKLYRPLMSRFLHSVDRIVAASPNYFSTSDVLRQYREKTRVITYGLDKDGYPKPATQRLEHWREKLGPRFFLFVGVMRYYKGLHILLDALQGTDYPVVIVGAGPLQAELYAQAAALGLRNVHFLGRVDDEDKVALLQLSYAMVFPSHLRSEAFGISLLEGAMYGKPMISSEIGTGTSYINIHGETGLVVPPSQPAAFRQAMRWLWEHPQQAEEMGRNAEARYRQLFTAEEMGRRWSELYRELLEEKASSRYVKAAR.

Substrate-binding residues include Glu19, His116, Lys206, and Val252.

This sequence belongs to the glycosyltransferase group 1 family. Glycosyltransferase 4 subfamily.

The protein resides in the cytoplasm. The catalysed reaction is GDP-alpha-D-rhamnose + N-acetyl-alpha-D-glucosaminyl-di-trans,octa-cis-undecaprenyl diphosphate = alpha-D-rhamnosyl-(1-&gt;3)-N-acetyl-alpha-D-glucosaminyl-1-diphospho-di-trans,octa-cis-undecaprenol + GDP + H(+). It catalyses the reaction GDP-alpha-D-rhamnose + N-acetyl-alpha-D-galactosaminyl-di-trans,octa-cis-undecaprenyl diphosphate = alpha-D-rhamnosyl-(1-&gt;3)-N-acetyl-alpha-D-galactosaminyl-1-diphospho-di-trans,octa-cis-undecaprenol + GDP + H(+). The enzyme catalyses N-acetyl-alpha-D-glucosaminyl-di-trans,octa-cis-undecaprenyl diphosphate + GDP-alpha-D-mannose = alpha-D-mannosyl-(1-&gt;3)-N-acetyl-alpha-D-glucosaminyl-di-trans,octa-cis-undecaprenyl diphosphate + GDP + H(+). It carries out the reaction N-acetyl-alpha-D-galactosaminyl-di-trans,octa-cis-undecaprenyl diphosphate + GDP-alpha-D-mannose = alpha-D-mannosyl-(1-&gt;3)-N-acetyl-alpha-D-galctosaminyl-1-diphospho-di-trans,octa-cis-undecaprenol + GDP + H(+). It participates in lipopolysaccharide biosynthesis; LPS oligosaccharide biosynthesis. With respect to regulation, not activated by dithiothreitol (DTT) using GlcNAc-alpha-PO(3)-PO(3)-phenylundecyl (GlcNAc-PP-PhU) as acceptor substrate. 0.25% Triton X-100 and 0.125% NP-40 increases the activity 2.5-fold and 2-fold, respectively. 0.125% octyl glucoside has little effect on activity. Slightly increased activity with Mg(2+) and Pb(2+), while no effect with Mn(2+), Co(2+), Ni(2+), Cu(2+), Zn(2+), Ca(2+) or EDTA. Not inhibited by N-butyryl-galactosamine-alpha-benzyl or N-butyryl-glucosamine-beta-benzyl. Bis-imidazolium salts having aliphatic spacer groups with 4 or 6 carbons have little effect on activity, but spacer groups of 18-22 aliphatic carbons inhibit activity, with the most potent inhibitor being bis-imidazolium salt having a 20-carbon chain spacer length. Non-processive alpha-1,3-D-rhamnosyltransferase. Catalyzes the transfer of one D-rhamnose (D-Rha) residue from donor substrate GDP-D-Rha in alpha-1-3 linkage to both GlcNAc- and GalNAc-diphosphate-lipid acceptor substrates. Is also able to transfer D-mannose (D-Man) to these acceptors at a lower level. Nucleotide sugars GDP-D-Rha, GDP-Fuc, UDP-Gal, UDP-GalNAc, UDP-GlcNAc and CMP-sialic acid cannot act as donor substrates. Only compounds with a diphosphate as the aglycone group can act as acceptor substrates. No activity is detected with compounds containing a diphosphate mimic. Fluorescent undecyl-anthracenyl group-containing compounds, such as GlcNAc-PO(3)-PO(3)-AnthrU and GalNAc-PO(3)-PO(3)-AnthrU, are also good acceptor substrates. Involved in the biosynthesis of the common polysaccharide antigen (CPA), also called A band, which is one of the two major cell surface O-antigens of the P.aeruginosa lipopolysaccharide. Involved in susceptibility to antibiotic colistin. This chain is D-rhamnosyltransferase WbpZ, found in Pseudomonas aeruginosa (strain ATCC 15692 / DSM 22644 / CIP 104116 / JCM 14847 / LMG 12228 / 1C / PRS 101 / PAO1).